A 343-amino-acid polypeptide reads, in one-letter code: Probable fructokinase-7 (343 aa).

At Gly-2 the chain carries N-acetylglycine.

The protein belongs to the carbohydrate kinase PfkB family.

The catalysed reaction is D-fructose + ATP = D-fructose 6-phosphate + ADP + H(+). Its pathway is glycan biosynthesis; starch biosynthesis. Its function is as follows. May play an important role in maintaining the flux of carbon towards starch formation. This is Probable fructokinase-7 from Arabidopsis thaliana (Mouse-ear cress).